An 82-amino-acid polypeptide reads, in one-letter code: uncharacterized protein (82 aa).

The next 2 membrane-spanning stretches (helical) occupy residues 32–52 (PFSI…IGIL) and 59–79 (SKPL…FNII).

The protein resides in the cell membrane. This is an uncharacterized protein from Rickettsia prowazekii (strain Madrid E).